The sequence spans 241 residues: Beta-nerve growth factor (241 aa).

Residues 1–18 (MSMLFYTLITAFLIGIQA) form the signal peptide. A propeptide spanning residues 19–121 (EPHSESNVPA…PVNRTHRSKR (103 aa)) is cleaved from the precursor. Asn69, Asn114, and Asn166 each carry an N-linked (GlcNAc...) asparagine glycan. Intrachain disulfides connect Cys136/Cys201, Cys179/Cys229, and Cys189/Cys231.

This sequence belongs to the NGF-beta family. In terms of assembly, homodimer. The homodimer interacts with a single NTRK1 chain. The homodimer interacts with a single NGFR chain. The NGF dimer interacts with a single SORCS2 chain (via extracellular domain). The NGF precursor (proNGF) binds to a receptor complex formed by SORT1 and NGFR, which leads to NGF endocytosis. Both mature NGF and the immature NGF precursor (proNGF) interact with SORCS2 and with the heterodimer formed by SORCS2 and NGFR (via extracellular domains). The NGF precursor (proNGF) has much higher affinity for SORCS2 than mature NGF. The NGF precursor (proNGF) has much higher affinity for SORT1 than mature NGF. Interacts with ADAM10 in a divalent cation-dependent manner. Interacts with SORCS3.

The protein localises to the secreted. It is found in the endosome lumen. In terms of biological role, nerve growth factor is important for the development and maintenance of the sympathetic and sensory nervous systems. Extracellular ligand for the NTRK1 and NGFR receptors, activates cellular signaling cascades through those receptor tyrosine kinase to regulate neuronal proliferation, differentiation and survival. Inhibits metalloproteinase dependent proteolysis of platelet glycoprotein VI. The chain is Beta-nerve growth factor (NGF) from Saimiri boliviensis boliviensis (Bolivian squirrel monkey).